A 709-amino-acid polypeptide reads, in one-letter code: Kelch domain-containing protein STK_09390 (709 aa).

The N-terminal stretch at 1–22 is a signal peptide; that stretch reads MKRNTLLALVLVILIFPTLSTA. Kelch repeat units follow at residues 49–94, 96–140, 141–192, 193–240, 242–288, and 290–340; these read KIFL…VCNN, LYVV…SYDY, KIYV…FNGS, ALFV…YYNG, MYLV…VQIG, and KLII…DTNA. Fibronectin type-III domains lie at 315-405, 406-488, 489-566, and 568-643; these read PPPK…VPNP, PIIK…ASKA, NLTV…IYYI, and PASP…NDVR.

In Sulfurisphaera tokodaii (strain DSM 16993 / JCM 10545 / NBRC 100140 / 7) (Sulfolobus tokodaii), this protein is Kelch domain-containing protein STK_09390.